Here is a 411-residue protein sequence, read N- to C-terminus: Carbamoyl phosphate synthase arginine-specific small chain (411 aa).

Residues Ser-50, Gly-232, and Gly-234 each coordinate L-glutamine. Residues Asn-185–Gln-376 form the Glutamine amidotransferase type-1 domain. Cys-264 (nucleophile) is an active-site residue. L-glutamine contacts are provided by Leu-265, Gln-268, Asn-306, Gly-308, and Tyr-309. Active-site residues include His-349 and Glu-351.

The protein belongs to the CarA family. As to quaternary structure, heterodimer composed of 2 chains; the small (or glutamine) chain promotes the hydrolysis of glutamine to ammonia, which is used by the large (or ammonia) chain to synthesize carbamoyl phosphate.

The protein localises to the cytoplasm. It carries out the reaction hydrogencarbonate + L-glutamine + 2 ATP + H2O = carbamoyl phosphate + L-glutamate + 2 ADP + phosphate + 2 H(+). It catalyses the reaction L-glutamine + H2O = L-glutamate + NH4(+). It functions in the pathway amino-acid biosynthesis; L-arginine biosynthesis; carbamoyl phosphate from bicarbonate: step 1/1. Functionally, small subunit of the arginine-specific carbamoyl phosphate synthase (CPSase). CPSase catalyzes the formation of carbamoyl phosphate from the ammonia moiety of glutamine, carbonate, and phosphate donated by ATP, constituting the first step of 2 biosynthetic pathways, one leading to arginine and/or urea and the other to pyrimidine nucleotides. The small subunit (glutamine amidotransferase) binds and cleaves glutamine to supply the large subunit with the substrate ammonia. In Saccharomyces cerevisiae (strain ATCC 204508 / S288c) (Baker's yeast), this protein is Carbamoyl phosphate synthase arginine-specific small chain (CPA1).